A 315-amino-acid chain; its full sequence is Putative carboxypeptidase RC0549 (315 aa).

The active-site Nucleophile is Ser125. Catalysis depends on charge relay system residues Glu225 and His288.

The protein belongs to the peptidase S66 family.

The protein is Putative carboxypeptidase RC0549 of Rickettsia conorii (strain ATCC VR-613 / Malish 7).